Reading from the N-terminus, the 568-residue chain is Transport inhibitor response 1-like protein Os11g0515500 (568 aa).

In terms of domain architecture, F-box spans 1–45 (MVFFPEEVVEHILGFLASHRDRNAVSLVCREWYRVERLSRRSVLV). 1D-myo-inositol hexakisphosphate is bound by residues Lys69, 103–104 (KR), and Arg335. The interaction with auxin-responsive proteins stretch occupies residues 338 to 343 (PANANA). 390–392 (SFR) is a 1D-myo-inositol hexakisphosphate binding site. An interaction with auxin-responsive proteins region spans residues 394-398 (CVLDP). Residue Arg425 coordinates 1D-myo-inositol hexakisphosphate. The interaction with auxin-responsive proteins stretch occupies residues 453-454 (AF). Residues 473-474 (KK) and Arg498 contribute to the 1D-myo-inositol hexakisphosphate site.

Part of a SCF (SKP1-cullin-F-box) protein ligase complex. May interact with auxin and auxin-responsive proteins.

The protein localises to the nucleus. It participates in protein modification; protein ubiquitination. This is Transport inhibitor response 1-like protein Os11g0515500 from Oryza sativa subsp. japonica (Rice).